The sequence spans 425 residues: Enolase (425 aa).

Residue glutamine 162 coordinates (2R)-2-phosphoglycerate. Glutamate 204 functions as the Proton donor in the catalytic mechanism. Positions 241, 282, and 309 each coordinate Mg(2+). The (2R)-2-phosphoglycerate site is built by lysine 334, arginine 363, serine 364, and lysine 385. Lysine 334 functions as the Proton acceptor in the catalytic mechanism.

Belongs to the enolase family. Requires Mg(2+) as cofactor.

It localises to the cytoplasm. The protein localises to the secreted. Its subcellular location is the cell surface. It catalyses the reaction (2R)-2-phosphoglycerate = phosphoenolpyruvate + H2O. Its pathway is carbohydrate degradation; glycolysis; pyruvate from D-glyceraldehyde 3-phosphate: step 4/5. Catalyzes the reversible conversion of 2-phosphoglycerate (2-PG) into phosphoenolpyruvate (PEP). It is essential for the degradation of carbohydrates via glycolysis. The chain is Enolase from Corynebacterium glutamicum (strain R).